Here is an 81-residue protein sequence, read N- to C-terminus: RNA-binding protein Hfq (81 aa).

The Sm domain occupies aspartate 9–valine 68.

Belongs to the Hfq family. In terms of assembly, homohexamer.

RNA chaperone that binds small regulatory RNA (sRNAs) and mRNAs to facilitate mRNA translational regulation in response to envelope stress, environmental stress and changes in metabolite concentrations. Also binds with high specificity to tRNAs. This is RNA-binding protein Hfq from Blochmanniella pennsylvanica (strain BPEN).